A 156-amino-acid chain; its full sequence is ATP synthase subunit b (156 aa).

A helical membrane pass occupies residues 7 to 27 (LFAQMVVFLILAWFTMKFVWP).

Belongs to the ATPase B chain family. F-type ATPases have 2 components, F(1) - the catalytic core - and F(0) - the membrane proton channel. F(1) has five subunits: alpha(3), beta(3), gamma(1), delta(1), epsilon(1). F(0) has three main subunits: a(1), b(2) and c(10-14). The alpha and beta chains form an alternating ring which encloses part of the gamma chain. F(1) is attached to F(0) by a central stalk formed by the gamma and epsilon chains, while a peripheral stalk is formed by the delta and b chains.

The protein localises to the cell inner membrane. In terms of biological role, f(1)F(0) ATP synthase produces ATP from ADP in the presence of a proton or sodium gradient. F-type ATPases consist of two structural domains, F(1) containing the extramembraneous catalytic core and F(0) containing the membrane proton channel, linked together by a central stalk and a peripheral stalk. During catalysis, ATP synthesis in the catalytic domain of F(1) is coupled via a rotary mechanism of the central stalk subunits to proton translocation. Component of the F(0) channel, it forms part of the peripheral stalk, linking F(1) to F(0). The sequence is that of ATP synthase subunit b from Paraburkholderia phymatum (strain DSM 17167 / CIP 108236 / LMG 21445 / STM815) (Burkholderia phymatum).